We begin with the raw amino-acid sequence, 78 residues long: Small ribosomal subunit protein bS20 (78 aa).

Residues 1–34 (MANIKSNLKRNKQNRARHTVVHSQTSAVKTQIKK) are disordered. A compositionally biased stretch (basic residues) spans 7–20 (NLKRNKQNRARHTV). The span at 21-34 (VHSQTSAVKTQIKK) shows a compositional bias: polar residues.

The protein belongs to the bacterial ribosomal protein bS20 family.

Its function is as follows. Binds directly to 16S ribosomal RNA. The protein is Small ribosomal subunit protein bS20 of Malacoplasma penetrans (strain HF-2) (Mycoplasma penetrans).